The following is a 152-amino-acid chain: Synaptobrevin (152 aa).

Over residues 1-16 (MENNEAPSPSGSNNND) the composition is skewed to polar residues. A disordered region spans residues 1 to 30 (MENNEAPSPSGSNNNDFPILPPPPNANDNY). The Cytoplasmic segment spans residues 1-110 (MENNEAPSPS…KRKQWWANMK (110 aa)). In terms of domain architecture, v-SNARE coiled-coil homology spans 47-107 (KLQQTQAKVD…GKLKRKQWWA (61 aa)). Residues 111–130 (MMIILGVIAVVLLIIVLVSV) form a helical; Anchor for type IV membrane protein membrane-spanning segment. Topologically, residues 131-152 (WPSSSDSGSGGGNKAITQAPPH) are vesicular. Residues 133-152 (SSSDSGSGGGNKAITQAPPH) are disordered.

Belongs to the synaptobrevin family. In terms of assembly, part of the SNARE core complex containing Snap25 and syntaxin. In terms of processing, ubiquitinated by gzl, regulating endocytic trafficking. In wing imaginal disks, ubiquitination by gzl promotes transcytosis of wingless (wg) to the basolateral surface. Not nervous system-specific; abundant in cells of the gut and Malpighian tubules.

Its subcellular location is the cytoplasmic vesicle. It is found in the secretory vesicle. The protein localises to the synaptic vesicle membrane. The protein resides in the cell membrane. Its function is as follows. Involved in the targeting and/or fusion of transport vesicles to their target membrane. This chain is Synaptobrevin, found in Drosophila melanogaster (Fruit fly).